The primary structure comprises 92 residues: DNA/RNA-binding protein Alba (92 aa).

N6-acetyllysine is present on Lys11.

Belongs to the histone-like Alba family. Acetylated. Acetylation at Lys-11 decreases DNA-binding affinity.

The protein localises to the cytoplasm. It is found in the chromosome. Functionally, binds double-stranded DNA tightly but without sequence specificity. Involved in DNA compaction. The chain is DNA/RNA-binding protein Alba from Pyrobaculum aerophilum (strain ATCC 51768 / DSM 7523 / JCM 9630 / CIP 104966 / NBRC 100827 / IM2).